Here is a 171-residue protein sequence, read N- to C-terminus: uncharacterized protein (171 aa).

Belongs to the mimivirus L87/L94 family.

This is an uncharacterized protein from Acanthamoeba polyphaga (Amoeba).